We begin with the raw amino-acid sequence, 182 residues long: ATP-dependent protease subunit HslV (182 aa).

The active site involves Thr12. Na(+)-binding residues include Ala167, Cys170, and Thr173.

Belongs to the peptidase T1B family. HslV subfamily. In terms of assembly, a double ring-shaped homohexamer of HslV is capped on each side by a ring-shaped HslU homohexamer. The assembly of the HslU/HslV complex is dependent on binding of ATP.

The protein localises to the cytoplasm. The catalysed reaction is ATP-dependent cleavage of peptide bonds with broad specificity.. Its activity is regulated as follows. Allosterically activated by HslU binding. Protease subunit of a proteasome-like degradation complex believed to be a general protein degrading machinery. The chain is ATP-dependent protease subunit HslV from Prosthecochloris aestuarii (strain DSM 271 / SK 413).